A 133-amino-acid chain; its full sequence is Cytochrome c-554 (133 aa).

At glutamine 1 the chain carries Pyrrolidone carboxylic acid. Positions 17, 122, 125, and 126 each coordinate heme c.

In terms of processing, binds 1 heme c group covalently per subunit.

The protein resides in the periplasm. In terms of biological role, monoheme c-type cytochrome, that is particularly expressed when cells generate energy via aerobic respiration. This Cereibacter sphaeroides (Rhodobacter sphaeroides) protein is Cytochrome c-554 (cycF).